The sequence spans 61 residues: Large ribosomal subunit protein bL32 (61 aa).

Basic residues predominate over residues 1 to 16; that stretch reads MAVPKRKTSPSKRGMR. Residues 1–39 are disordered; sequence MAVPKRKTSPSKRGMRRSADALKAPTYIEDKNSGELRRP. Residues 28 to 39 show a composition bias toward basic and acidic residues; the sequence is IEDKNSGELRRP.

Belongs to the bacterial ribosomal protein bL32 family.

The polypeptide is Large ribosomal subunit protein bL32 (Rhizobium meliloti (strain 1021) (Ensifer meliloti)).